Reading from the N-terminus, the 245-residue chain is Biosynthetic peptidoglycan transglycosylase (245 aa).

Residues 20-42 traverse the membrane as a helical segment; the sequence is VYAGSVFAGAWLATQLFYLAQIA.

It belongs to the glycosyltransferase 51 family.

Its subcellular location is the cell inner membrane. It carries out the reaction [GlcNAc-(1-&gt;4)-Mur2Ac(oyl-L-Ala-gamma-D-Glu-L-Lys-D-Ala-D-Ala)](n)-di-trans,octa-cis-undecaprenyl diphosphate + beta-D-GlcNAc-(1-&gt;4)-Mur2Ac(oyl-L-Ala-gamma-D-Glu-L-Lys-D-Ala-D-Ala)-di-trans,octa-cis-undecaprenyl diphosphate = [GlcNAc-(1-&gt;4)-Mur2Ac(oyl-L-Ala-gamma-D-Glu-L-Lys-D-Ala-D-Ala)](n+1)-di-trans,octa-cis-undecaprenyl diphosphate + di-trans,octa-cis-undecaprenyl diphosphate + H(+). It functions in the pathway cell wall biogenesis; peptidoglycan biosynthesis. Functionally, peptidoglycan polymerase that catalyzes glycan chain elongation from lipid-linked precursors. This is Biosynthetic peptidoglycan transglycosylase from Burkholderia cenocepacia (strain HI2424).